The sequence spans 187 residues: Basic helix-loop-helix transcription factor scleraxis (187 aa).

Disordered regions lie at residues 21–83 (LSED…TNSV) and 140–163 (AFFH…QPKQ). Residues 34–43 (SDEKPFHLDA) are compositionally biased toward basic and acidic residues. Residues 50–72 (AGKRRSGKKAGRLHREPRQRHTA) are compositionally biased toward basic residues. In terms of domain architecture, bHLH spans 67–119 (RQRHTANARERDRTNSVNTAFTALRTLIPTEPADRKLSKIETLRLASSYISHL).

As to quaternary structure, efficient DNA binding requires dimerization with another bHLH protein. Dimerizes and binds the E-box consensus sequence with E12. In terms of tissue distribution, expressed in the intersomitic, the superficial proximomedial limb mesenchyme and the subectodermal mesenchyme.

It is found in the nucleus. In terms of biological role, plays an early essential role in mesoderm formation, as well as a later role in formation of somite-derived chondrogenic lineages. The polypeptide is Basic helix-loop-helix transcription factor scleraxis (SCX) (Gallus gallus (Chicken)).